The following is a 396-amino-acid chain: Na(+)/H(+) antiporter NhaA 2 (396 aa).

Helical transmembrane passes span 17–37 (LSGLILFVVTVLAVTIANSDF), 62–82 (LLHWINDVLMAIFFLVVGLEI), 98–118 (SFPIIAAIGGMIVPAILYISL), 125–145 (GFGVPMATDIAFALGILMLLG), 154–174 (LFLVTLAVVDDLGAIVVVAIF), 179–199 (LHFEYFLYAFAVYSIIWFLNY), 209–229 (IILGVFLWIFIHKTGIHSTIA), 268–288 (FSAFIIMPLFAFANAGVIIDF), 296–316 (LIVLGVALGLIIGKPIGIFSF), 337–357 (IFAVGFLGGIGFTMSIFISHL), and 368–388 (VKLGIFASSVIAAIIGSVLLI).

The protein belongs to the NhaA Na(+)/H(+) (TC 2.A.33) antiporter family.

It localises to the cell inner membrane. It carries out the reaction Na(+)(in) + 2 H(+)(out) = Na(+)(out) + 2 H(+)(in). Na(+)/H(+) antiporter that extrudes sodium in exchange for external protons. The protein is Na(+)/H(+) antiporter NhaA 2 of Aliarcobacter butzleri (strain RM4018) (Arcobacter butzleri).